The following is a 95-amino-acid chain: Bombyxin F-1 (95 aa).

A signal peptide spans 1–19 (MKLVVIVLLVISVSILVSA). 3 disulfide bridges follow: Cys29/Cys82, Cys41/Cys95, and Cys81/Cys86. A propeptide spans 53-71 (NSDMVYEDSGMPELLPADT) (c peptide like).

This sequence belongs to the insulin family. Heterodimer of a B chain and an A chain linked by two disulfide bonds.

It localises to the secreted. The protein is Bombyxin F-1 (BBXF1) of Bombyx mori (Silk moth).